Here is a 374-residue protein sequence, read N- to C-terminus: tRNA (guanine(26)-N(2))-dimethyltransferase (374 aa).

Residues 4 to 371 (IEIREGKASL…KEIDEIVNCI (368 aa)) form the Trm1 methyltransferase domain. S-adenosyl-L-methionine-binding residues include R44, R69, D87, D113, and A114. 4 residues coordinate Zn(2+): C244, C247, C261, and C264.

This sequence belongs to the class I-like SAM-binding methyltransferase superfamily. Trm1 family.

It carries out the reaction guanosine(26) in tRNA + 2 S-adenosyl-L-methionine = N(2)-dimethylguanosine(26) in tRNA + 2 S-adenosyl-L-homocysteine + 2 H(+). In terms of biological role, dimethylates a single guanine residue at position 26 of a number of tRNAs using S-adenosyl-L-methionine as donor of the methyl groups. This chain is tRNA (guanine(26)-N(2))-dimethyltransferase, found in Sulfurisphaera tokodaii (strain DSM 16993 / JCM 10545 / NBRC 100140 / 7) (Sulfolobus tokodaii).